Consider the following 79-residue polypeptide: Small ribosomal subunit protein bS18 (79 aa).

It belongs to the bacterial ribosomal protein bS18 family. As to quaternary structure, part of the 30S ribosomal subunit. Forms a tight heterodimer with protein bS6.

Functionally, binds as a heterodimer with protein bS6 to the central domain of the 16S rRNA, where it helps stabilize the platform of the 30S subunit. This chain is Small ribosomal subunit protein bS18, found in Listeria innocua serovar 6a (strain ATCC BAA-680 / CLIP 11262).